The chain runs to 270 residues: MIKDITIGQYVPGDSFIHKLDPRVKILISLIYIVDLFIVNSFKGYIFIVVFTLISILVSKVQFTYIYKGLKPIFILVLITAVLNIFMTGGANPPLFKWKFLVVYREGLIMAAFMALRLVFLIIGTSLLTLTTSPIELTDGIEKLLKPVSKIGVPSHELAMMMTIALRFIPTLMDETDKIMKAQIARGADLESGNLIQKAKNLVPILVPLFISSFRRADELAMAMEARCYRGGDGRTRMKELKLSNRDFIASLCALVLVCISILSRIWWGK.

Transmembrane regions (helical) follow at residues 36–56, 72–92, 108–128, and 248–268; these read LFIVNSFKGYIFIVVFTLISI, PIFILVLITAVLNIFMTGGAN, LIMAAFMALRLVFLIIGTSLL, and FIASLCALVLVCISILSRIWW.

It belongs to the energy-coupling factor EcfT family. As to quaternary structure, forms a stable energy-coupling factor (ECF) transporter complex composed of 2 membrane-embedded substrate-binding proteins (S component), 2 ATP-binding proteins (A component) and 2 transmembrane proteins (T component). May be able to interact with more than 1 S component at a time.

Its subcellular location is the cell membrane. Its function is as follows. Transmembrane (T) component of an energy-coupling factor (ECF) ABC-transporter complex. Unlike classic ABC transporters this ECF transporter provides the energy necessary to transport a number of different substrates. The polypeptide is Energy-coupling factor transporter transmembrane protein EcfT (Clostridium kluyveri (strain ATCC 8527 / DSM 555 / NBRC 12016 / NCIMB 10680 / K1)).